The primary structure comprises 542 residues: CTP synthase (542 aa).

An amidoligase domain region spans residues 1–265; the sequence is MTKFVFVTGG…DEIVCHKLNL (265 aa). A CTP-binding site is contributed by serine 13. Serine 13 contacts UTP. Residues 14–19 and aspartate 71 each bind ATP; that span reads SLGKGI. Residues aspartate 71 and glutamate 139 each coordinate Mg(2+). Residues 146–148, 186–191, and lysine 222 contribute to the CTP site; these read DIE and KTKPTQ. Residues 186–191 and lysine 222 each bind UTP; that span reads KTKPTQ. Positions 290 to 542 constitute a Glutamine amidotransferase type-1 domain; sequence NVAFVGKYVD…IAAALANRKA (253 aa). Position 351 (glycine 351) interacts with L-glutamine. The active-site Nucleophile; for glutamine hydrolysis is cysteine 378. Residues 379-382, glutamate 402, and arginine 468 each bind L-glutamine; that span reads LGMQ. Residues histidine 515 and glutamate 517 contribute to the active site.

It belongs to the CTP synthase family. Homotetramer.

The enzyme catalyses UTP + L-glutamine + ATP + H2O = CTP + L-glutamate + ADP + phosphate + 2 H(+). It carries out the reaction L-glutamine + H2O = L-glutamate + NH4(+). It catalyses the reaction UTP + NH4(+) + ATP = CTP + ADP + phosphate + 2 H(+). It functions in the pathway pyrimidine metabolism; CTP biosynthesis via de novo pathway; CTP from UDP: step 2/2. Its activity is regulated as follows. Allosterically activated by GTP, when glutamine is the substrate; GTP has no effect on the reaction when ammonia is the substrate. The allosteric effector GTP functions by stabilizing the protein conformation that binds the tetrahedral intermediate(s) formed during glutamine hydrolysis. Inhibited by the product CTP, via allosteric rather than competitive inhibition. In terms of biological role, catalyzes the ATP-dependent amination of UTP to CTP with either L-glutamine or ammonia as the source of nitrogen. Regulates intracellular CTP levels through interactions with the four ribonucleotide triphosphates. The sequence is that of CTP synthase from Methylobacillus flagellatus (strain ATCC 51484 / DSM 6875 / VKM B-1610 / KT).